A 156-amino-acid polypeptide reads, in one-letter code: ATP synthase subunit b (156 aa).

The helical transmembrane segment at 7 to 27 threads the bilayer; the sequence is IFFQMLVFFVLGWFTMKFVWP.

It belongs to the ATPase B chain family. As to quaternary structure, F-type ATPases have 2 components, F(1) - the catalytic core - and F(0) - the membrane proton channel. F(1) has five subunits: alpha(3), beta(3), gamma(1), delta(1), epsilon(1). F(0) has three main subunits: a(1), b(2) and c(10-14). The alpha and beta chains form an alternating ring which encloses part of the gamma chain. F(1) is attached to F(0) by a central stalk formed by the gamma and epsilon chains, while a peripheral stalk is formed by the delta and b chains.

It localises to the cell inner membrane. Functionally, f(1)F(0) ATP synthase produces ATP from ADP in the presence of a proton or sodium gradient. F-type ATPases consist of two structural domains, F(1) containing the extramembraneous catalytic core and F(0) containing the membrane proton channel, linked together by a central stalk and a peripheral stalk. During catalysis, ATP synthesis in the catalytic domain of F(1) is coupled via a rotary mechanism of the central stalk subunits to proton translocation. Its function is as follows. Component of the F(0) channel, it forms part of the peripheral stalk, linking F(1) to F(0). The polypeptide is ATP synthase subunit b (Bordetella petrii (strain ATCC BAA-461 / DSM 12804 / CCUG 43448)).